The chain runs to 808 residues: Probable ATP-dependent helicase MJ1401 (808 aa).

The short motif at 189-217 (YKIDELDIPEELKEIIKSRGIEELLPVQT) is the Q motif element. The 171-residue stretch at 221 to 391 (KAGLLNGDDL…QLNAKLVLYN (171 aa)) folds into the Helicase ATP-binding domain. Residue 234–241 (SATSSGKT) participates in ATP binding. The short motif at 336–339 (DEIH) is the DEIH box element. The Helicase C-terminal domain occupies 396-585 (PLERHIIFCK…EDEEEEQILA (190 aa)).

It belongs to the DEAD box helicase family.

This Methanocaldococcus jannaschii (strain ATCC 43067 / DSM 2661 / JAL-1 / JCM 10045 / NBRC 100440) (Methanococcus jannaschii) protein is Probable ATP-dependent helicase MJ1401.